The primary structure comprises 254 residues: Proteasome subunit alpha type-7 (254 aa).

O-linked (GlcNAc) serine glycosylation is present at S136. Y159 is modified (phosphotyrosine). The residue at position 233 (K233) is an N6-acetyllysine.

The protein belongs to the peptidase T1A family. As to quaternary structure, the 26S proteasome consists of a 20S proteasome core and two 19S regulatory subunits. The 20S proteasome core is a barrel-shaped complex made of 28 subunits that are arranged in four stacked rings. The two outer rings are each formed by seven alpha subunits, and the two inner rings are formed by seven beta subunits. The proteolytic activity is exerted by three beta-subunits PSMB5, PSMB6 and PSMB7. PSMA7 interacts directly with the PSMG1-PSMG2 heterodimer which promotes 20S proteasome assembly. Interacts with HIF1A. Interacts with RAB7A. Interacts with PRKN. Interacts with ABL1 and ABL2. Interacts with EMAP2. Interacts with MAVS. Ubiquitous.

It is found in the cytoplasm. It localises to the nucleus. In terms of biological role, component of the 20S core proteasome complex involved in the proteolytic degradation of most intracellular proteins. This complex plays numerous essential roles within the cell by associating with different regulatory particles. Associated with two 19S regulatory particles, forms the 26S proteasome and thus participates in the ATP-dependent degradation of ubiquitinated proteins. The 26S proteasome plays a key role in the maintenance of protein homeostasis by removing misfolded or damaged proteins that could impair cellular functions, and by removing proteins whose functions are no longer required. Associated with the PA200 or PA28, the 20S proteasome mediates ubiquitin-independent protein degradation. This type of proteolysis is required in several pathways including spermatogenesis (20S-PA200 complex) or generation of a subset of MHC class I-presented antigenic peptides (20S-PA28 complex). Inhibits the transactivation function of HIF-1A under both normoxic and hypoxia-mimicking conditions. The interaction with EMAP2 increases the proteasome-mediated HIF-1A degradation under the hypoxic conditions. Plays a role in hepatitis C virus internal ribosome entry site-mediated translation. Mediates nuclear translocation of the androgen receptor (AR) and thereby enhances androgen-mediated transactivation. Promotes MAVS degradation and thereby negatively regulates MAVS-mediated innate immune response. In Rattus norvegicus (Rat), this protein is Proteasome subunit alpha type-7 (Psma7).